The chain runs to 67 residues: MPQQFEQPQAQQAVTQEDDALATTQAATQTESTDQADVLDDILDDIESTLETNAEEYVNSFVQKGGE.

Low complexity predominate over residues 1 to 36 (MPQQFEQPQAQQAVTQEDDALATTQAATQTESTDQA). The segment at 1 to 38 (MPQQFEQPQAQQAVTQEDDALATTQAATQTESTDQADV) is disordered. Positions 23–61 (TTQAATQTESTDQADVLDDILDDIESTLETNAEEYVNSF) are ARC ATPase binding. Glutamate 67 is covalently cross-linked (Isoglutamyl lysine isopeptide (Glu-Lys) (interchain with K-? in acceptor proteins)).

This sequence belongs to the prokaryotic ubiquitin-like protein family. In terms of assembly, strongly interacts with the proteasome-associated ATPase ARC through a hydrophobic interface; the interacting region of Pup lies in its C-terminal half. There is one Pup binding site per ARC hexamer ring.

Its pathway is protein degradation; proteasomal Pup-dependent pathway. In terms of biological role, protein modifier that is covalently attached to lysine residues of substrate proteins, thereby targeting them for proteasomal degradation. The tagging system is termed pupylation. The polypeptide is Prokaryotic ubiquitin-like protein Pup (Bifidobacterium longum subsp. infantis (strain ATCC 15697 / DSM 20088 / JCM 1222 / NCTC 11817 / S12)).